An 83-amino-acid chain; its full sequence is Cobrotoxin (83 aa).

An N-terminal signal peptide occupies residues 1–21 (MKTLLLTLLVVTIVCLDLGYT). 4 disulfides stabilise this stretch: C24-C45, C38-C62, C64-C75, and C76-C81.

This sequence belongs to the three-finger toxin family. Short-chain subfamily. Type I alpha-neurotoxin sub-subfamily. Expressed by the venom gland.

It localises to the secreted. Its function is as follows. Binds to muscle nicotinic acetylcholine receptor (nAChR) and inhibit acetylcholine from binding to the receptor, thereby impairing neuromuscular transmission. Has a higher toxicity than cobrotoxin-b. In vivo, when tested on rat arthritis models, shows anti-inflammation and immunosuppression effects. This Naja atra (Chinese cobra) protein is Cobrotoxin.